We begin with the raw amino-acid sequence, 168 residues long: UPF0478 protein SH1183 (168 aa).

A helical transmembrane segment spans residues 7–27; that stretch reads IAGIIAAIAFLVLCIGIVVVL. The segment at 144–168 is disordered; the sequence is YRNTSVGNDANHSNENYTTNVEKNF.

It belongs to the UPF0478 family.

The protein resides in the cell membrane. The chain is UPF0478 protein SH1183 from Staphylococcus haemolyticus (strain JCSC1435).